We begin with the raw amino-acid sequence, 176 residues long: Tubulin polymerization-promoting protein family member 3 (176 aa).

Residues 126–152 are disordered; that stretch reads TDTSKYTGSHKERFDESGKGKGKGGRE. Basic and acidic residues predominate over residues 134–152; it reads SHKERFDESGKGKGKGGRE.

It belongs to the TPPP family.

Its subcellular location is the cytoplasm. The protein localises to the cytoskeleton. Its function is as follows. Regulator of microtubule dynamic that has microtubule bundling activity. In Xenopus tropicalis (Western clawed frog), this protein is Tubulin polymerization-promoting protein family member 3 (tppp3).